We begin with the raw amino-acid sequence, 383 residues long: Lipoyl synthase, mitochondrial (383 aa).

Over residues 25-34 (STPSLLQTLD) the composition is skewed to polar residues. Residues 25 to 44 (STPSLLQTLDPSVPSPPAAG) are disordered. Residues Cys-110, Cys-115, Cys-121, Cys-141, Cys-145, Cys-148, and Ser-357 each coordinate [4Fe-4S] cluster. The 221-residue stretch at 126–346 (ETGTATATIM…RALGVEMGFR (221 aa)) folds into the Radical SAM core domain.

Belongs to the radical SAM superfamily. Lipoyl synthase family. Requires [4Fe-4S] cluster as cofactor.

The protein localises to the mitochondrion. The enzyme catalyses [[Fe-S] cluster scaffold protein carrying a second [4Fe-4S](2+) cluster] + N(6)-octanoyl-L-lysyl-[protein] + 2 oxidized [2Fe-2S]-[ferredoxin] + 2 S-adenosyl-L-methionine + 4 H(+) = [[Fe-S] cluster scaffold protein] + N(6)-[(R)-dihydrolipoyl]-L-lysyl-[protein] + 4 Fe(3+) + 2 hydrogen sulfide + 2 5'-deoxyadenosine + 2 L-methionine + 2 reduced [2Fe-2S]-[ferredoxin]. Its pathway is protein modification; protein lipoylation via endogenous pathway; protein N(6)-(lipoyl)lysine from octanoyl-[acyl-carrier-protein]: step 2/2. In terms of biological role, catalyzes the radical-mediated insertion of two sulfur atoms into the C-6 and C-8 positions of the octanoyl moiety bound to the lipoyl domains of lipoate-dependent enzymes, thereby converting the octanoylated domains into lipoylated derivatives. In Zea mays (Maize), this protein is Lipoyl synthase, mitochondrial.